Consider the following 214-residue polypeptide: Acetoin utilization protein AcuB (214 aa).

CBS domains lie at 7-66 (MKRD…ENKR) and 78-135 (MKKD…GADQ).

In terms of assembly, interacts with YabA.

It participates in ketone degradation; acetoin degradation. Functionally, role in growth and sporulation on acetoin or butanediol. Involved in the breakdown of these compounds used as a carbon source. The protein is Acetoin utilization protein AcuB (acuB) of Bacillus subtilis (strain 168).